The following is a 78-amino-acid chain: Large ribosomal subunit protein bL28 (78 aa).

The tract at residues 1 to 21 (MSRVCQVTGKKPMVGNNRSHA) is disordered.

The protein belongs to the bacterial ribosomal protein bL28 family.

The polypeptide is Large ribosomal subunit protein bL28 (Shewanella woodyi (strain ATCC 51908 / MS32)).